Consider the following 540-residue polypeptide: Mitochondrial distribution and morphology protein 34 (540 aa).

The region spanning 1–208 is the SMP-LTD domain; that stretch reads MSFKFNSGTF…LPSVIFNMSQ (208 aa). 2 disordered regions span residues 26-51 and 379-399; these read ALNP…KKPK and RSKS…SGSL. Residues 35–44 are compositionally biased toward polar residues; the sequence is PESTSGQDGS.

It belongs to the MDM34 family. In terms of assembly, component of the ER-mitochondria encounter structure (ERMES) or MDM complex, composed of MMM1, MDM10, MDM12 and MDM34.

It localises to the mitochondrion outer membrane. Functionally, component of the ERMES/MDM complex, which serves as a molecular tether to connect the endoplasmic reticulum (ER) and mitochondria. Components of this complex are involved in the control of mitochondrial shape and protein biogenesis, and function in nonvesicular lipid trafficking between the ER and mitochondria. MDM34 is required for the interaction of the ER-resident membrane protein MMM1 and the outer mitochondrial membrane-resident beta-barrel protein MDM10. The protein is Mitochondrial distribution and morphology protein 34 of Kluyveromyces lactis (strain ATCC 8585 / CBS 2359 / DSM 70799 / NBRC 1267 / NRRL Y-1140 / WM37) (Yeast).